A 105-amino-acid polypeptide reads, in one-letter code: Guanyl-specific ribonuclease U1 (105 aa).

A Pyrrolidone carboxylic acid modification is found at Gln1. 2 disulfides stabilise this stretch: Cys8–Cys103 and Cys51–Cys87. His37 is an active-site residue. Glu57 functions as the Proton acceptor in the catalytic mechanism. Catalysis depends on His92, which acts as the Proton donor.

It belongs to the ribonuclease N1/T1 family.

It catalyses the reaction [RNA] containing guanosine + H2O = an [RNA fragment]-3'-guanosine-3'-phosphate + a 5'-hydroxy-ribonucleotide-3'-[RNA fragment].. In Ustilago sphaerogena (Smut fungus), this protein is Guanyl-specific ribonuclease U1.